We begin with the raw amino-acid sequence, 194 residues long: Inner membrane-spanning protein YciB (194 aa).

Transmembrane regions (helical) follow at residues 1-21 (MKLLFDFFPIILFFVVYKTTN), 49-69 (EKMHLFALVIVVILGGATILF), 77-97 (WKPSVVCWLLAVVFLIGGWVS), 120-140 (LNYSWVIFNTLLGALNLYVAY), and 150-170 (FKLFGMLGLSLVFALMQGVYI).

This sequence belongs to the YciB family.

It is found in the cell inner membrane. Plays a role in cell envelope biogenesis, maintenance of cell envelope integrity and membrane homeostasis. This chain is Inner membrane-spanning protein YciB, found in Hahella chejuensis (strain KCTC 2396).